The sequence spans 102 residues: Small ribosomal subunit protein eS24 (102 aa).

Residues 70 to 102 (VYDSPAQAAEVEHDHMLERNKIGADDADAEEAE) are disordered. Over residues 79–93 (EVEHDHMLERNKIGA) the composition is skewed to basic and acidic residues.

The protein belongs to the eukaryotic ribosomal protein eS24 family.

The polypeptide is Small ribosomal subunit protein eS24 (Halobacterium salinarum (strain ATCC 29341 / DSM 671 / R1)).